The chain runs to 422 residues: S100P-binding protein (422 aa).

Disordered stretches follow at residues 1-28, 61-135, and 170-292; these read MMCSLVPSEQSSGTSLLPKDNAPFSWSS, LKDD…TPAK, and YVSE…DSGK. Basic and acidic residues predominate over residues 80 to 90; that stretch reads DDSRNVEKGEK. Ser195 carries the phosphoserine modification. The segment covering 231-241 has biased composition (basic and acidic residues); it reads VSDKNMSDSKK. Residues 255 to 269 show a composition bias toward polar residues; that stretch reads TPNTGSSRRNGSYKS. The span at 274–283 shows a compositional bias: low complexity; that stretch reads KLPVSSSSSK.

Interacts with S100P.

Its subcellular location is the nucleus. The sequence is that of S100P-binding protein from Bos taurus (Bovine).